A 405-amino-acid polypeptide reads, in one-letter code: Caspase-1 (405 aa).

The CARD domain maps to 1–91; the sequence is MADKVLKEKR…HLAETLRLSS (91 aa). Residues 1–119 constitute a propeptide that is removed on maturation; it reads MADKVLKEKR…SSPALQAMPD (119 aa). Residues His238 and Cys286 contribute to the active site. A propeptide spanning residues 299–317 is cleaved from the precursor; the sequence is STGTSGNSSSLAPDDFEDD. Ser303 bears the Phosphoserine mark.

Belongs to the peptidase C14A family. In terms of assembly, heterotetramer that consists of two anti-parallel arranged heterodimers, each one formed by a 20 kDa (Caspase-1 subunit p20) and a 10 kDa (Caspase-1 subunit p10) subunit. May be a component of the inflammasome, a protein complex which also includes PYCARD, CARD8 and NLRP2 and whose function would be the activation of pro-inflammatory caspases. Component of the AIM2 PANoptosome complex, a multiprotein complex that drives inflammatory cell death (PANoptosis). Both the p10 and p20 subunits interact with MEFV. Interacts with CARD17P/INCA and CARD18. Interacts with SERPINB1; this interaction regulates CASP1 activity. Heterotetramer that consists of two anti-parallel arranged heterodimers, each one formed by a 20 kDa (Caspase-1 subunit p20) and a 10 kDa (Caspase-1 subunit p10) subunit. In terms of processing, the two subunits are derived from the precursor sequence by an autocatalytic mechanism. Ubiquitinated via 'Lys-11'-linked polyubiquitination. Deubiquitinated by USP8.

It is found in the cytoplasm. The protein resides in the cell membrane. It catalyses the reaction Strict requirement for an Asp residue at position P1 and has a preferred cleavage sequence of Tyr-Val-Ala-Asp-|-.. In terms of biological role, thiol protease involved in a variety of inflammatory processes by proteolytically cleaving other proteins, such as the precursors of the inflammatory cytokines interleukin-1 beta (IL1B) and interleukin 18 (IL18) as well as the pyroptosis inducer Gasdermin-D (GSDMD), into active mature peptides. Plays a key role in cell immunity as an inflammatory response initiator: once activated through formation of an inflammasome complex, it initiates a pro-inflammatory response through the cleavage of the two inflammatory cytokines IL1B and IL18, releasing the mature cytokines which are involved in a variety of inflammatory processes. Cleaves a tetrapeptide after an Asp residue at position P1. Also initiates pyroptosis, a programmed lytic cell death pathway, through cleavage of GSDMD. In contrast to cleavage of interleukin IL1B, recognition and cleavage of GSDMD is not strictly dependent on the consensus cleavage site but depends on an exosite interface on CASP1 that recognizes and binds the Gasdermin-D, C-terminal (GSDMD-CT) part. Cleaves and activates CASP7 in response to bacterial infection, promoting plasma membrane repair. Upon inflammasome activation, during DNA virus infection but not RNA virus challenge, controls antiviral immunity through the cleavage of CGAS, rendering it inactive. In apoptotic cells, cleaves SPHK2 which is released from cells and remains enzymatically active extracellularly. The sequence is that of Caspase-1 (CASP1) from Equus caballus (Horse).